The following is a 366-amino-acid chain: 2-aminoethylphosphonate--pyruvate transaminase (366 aa).

Lys194 carries the post-translational modification N6-(pyridoxal phosphate)lysine.

It belongs to the class-V pyridoxal-phosphate-dependent aminotransferase family. PhnW subfamily. In terms of assembly, homodimer. Requires pyridoxal 5'-phosphate as cofactor.

The enzyme catalyses (2-aminoethyl)phosphonate + pyruvate = phosphonoacetaldehyde + L-alanine. In terms of biological role, involved in phosphonate degradation. This Lactiplantibacillus plantarum (strain ATCC BAA-793 / NCIMB 8826 / WCFS1) (Lactobacillus plantarum) protein is 2-aminoethylphosphonate--pyruvate transaminase.